A 424-amino-acid chain; its full sequence is Histidine--tRNA ligase (424 aa).

Belongs to the class-II aminoacyl-tRNA synthetase family. As to quaternary structure, homodimer.

The protein resides in the cytoplasm. It catalyses the reaction tRNA(His) + L-histidine + ATP = L-histidyl-tRNA(His) + AMP + diphosphate + H(+). The sequence is that of Histidine--tRNA ligase from Klebsiella pneumoniae (strain 342).